The primary structure comprises 75 residues: Sec-independent protein translocase protein TatA (75 aa).

The chain crosses the membrane as a helical span at residues 1–21 (MGGISIWQLLIIVAIIVLLFG). The interval 50 to 75 (DAEFKSLNKDESATAGSEKVKDKEQA) is disordered.

The protein belongs to the TatA/E family. The Tat system comprises two distinct complexes: a TatABC complex, containing multiple copies of TatA, TatB and TatC subunits, and a separate TatA complex, containing only TatA subunits. Substrates initially bind to the TatABC complex, which probably triggers association of the separate TatA complex to form the active translocon.

It localises to the cell inner membrane. Part of the twin-arginine translocation (Tat) system that transports large folded proteins containing a characteristic twin-arginine motif in their signal peptide across membranes. TatA could form the protein-conducting channel of the Tat system. The sequence is that of Sec-independent protein translocase protein TatA from Mannheimia succiniciproducens (strain KCTC 0769BP / MBEL55E).